Reading from the N-terminus, the 156-residue chain is Type II secretion system core protein G (156 aa).

Residues 1-22 (MQQSQRGCGQNSYGQSGYRQRG) constitute a propeptide, leader sequence. Phenylalanine 23 is subject to N-methylphenylalanine. Residues 23–43 (FTLLEIMVVIVILGVLASLVV) traverse the membrane as a helical segment.

It belongs to the GSP G family. As to quaternary structure, type II secretion system is composed of four main components: the outer membrane complex, the inner membrane complex, the cytoplasmic secretion ATPase and the periplasm-spanning pseudopilus. Forms homomultimers. In terms of processing, cleaved by the prepilin peptidase. Methylated by prepilin peptidase at the amino group of the N-terminal phenylalanine once the leader sequence is cleaved.

The protein resides in the cell inner membrane. Functionally, core component of the type II secretion system required for the energy-dependent secretion of extracellular factors such as proteases and toxins from the periplasm. Pseudopilin (pilin-like) protein that polymerizes to form the pseudopilus. Further polymerization triggers pseudopilus growth. The sequence is that of Type II secretion system core protein G (outG) from Pectobacterium carotovorum subsp. carotovorum (Erwinia carotovora subsp. carotovora).